The primary structure comprises 492 residues: Cytoplasmic dynein 1 light intermediate chain 2 (492 aa).

61 to 68 lines the ATP pocket; the sequence is GEDGSGKT. 3 disordered regions span residues 188–207, 370–423, and 437–492; these read EEGC…GSDE, LAKQ…KNNA, and LSKK…ENEA. Residues serine 194, serine 383, and serine 391 each carry the phosphoserine modification. The segment covering 370-383 has biased composition (polar residues); sequence LAKQPATPTRTSES. Residue arginine 397 is modified to Omega-N-methylarginine. The segment covering 437 to 469 has biased composition (polar residues); it reads LSKKTGSPGSPSAGGVQSTAKKSGQKTVLSNVQ. At threonine 441 the chain carries Phosphothreonine. 2 positions are modified to phosphoserine: serine 443 and serine 446. Positions 471 to 480 are enriched in basic and acidic residues; it reads ELDRMTRKPD. Polar residues predominate over residues 482–492; that stretch reads MVTNSSTENEA.

This sequence belongs to the dynein light intermediate chain family. Homodimer. The cytoplasmic dynein 1 complex consists of two catalytic heavy chains (HCs) and a number of non-catalytic subunits presented by intermediate chains (ICs), light intermediate chains (LICs) and light chains (LCs); the composition seems to vary in respect to the IC, LIC and LC composition. The heavy chain homodimer serves as a scaffold for the probable homodimeric assembly of the respective non-catalytic subunits. The ICs and LICs bind directly to the HC dimer and the LCs assemble on the IC dimer. Interacts with DYNC1H1; DYNC1LI1 and DYNC1LI2 bind mutually exclusive to DYNC1H.

Its subcellular location is the cytoplasm. It localises to the cytoskeleton. Functionally, acts as one of several non-catalytic accessory components of the cytoplasmic dynein 1 complex that are thought to be involved in linking dynein to cargos and to adapter proteins that regulate dynein function. Cytoplasmic dynein 1 acts as a motor for the intracellular retrograde motility of vesicles and organelles along microtubules. May play a role in binding dynein to membranous organelles or chromosomes. This chain is Cytoplasmic dynein 1 light intermediate chain 2 (Dync1li2), found in Mus musculus (Mouse).